The primary structure comprises 275 residues: Centromere protein V (275 aa).

Low complexity-rich tracts occupy residues 1-10 and 17-51; these read MRRSRSSAAA and RSGA…QAGS. Positions 1–109 are disordered; that stretch reads MRRSRSSAAA…ATPTSSASNL (109 aa). A phosphoserine mark is found at serine 18 and serine 21. Arginine 43 is modified (omega-N-methylarginine). Pro residues predominate over residues 79-100; that stretch reads GEPPPPELALLPPPPPPPPTPA. 3 positions are modified to phosphothreonine: threonine 98, threonine 101, and threonine 103. The CENP-V/GFA domain maps to 148 to 260; the sequence is HTGGCHCGAV…TEEFNGSDWE (113 aa). Residues cysteine 152, cysteine 154, cysteine 172, cysteine 174, cysteine 177, cysteine 216, and cysteine 219 each contribute to the Zn(2+) site. Serine 257 carries the phosphoserine modification.

This sequence belongs to the Gfa family. Requires Zn(2+) as cofactor.

The protein resides in the chromosome. Its subcellular location is the centromere. The protein localises to the kinetochore. It localises to the nucleus. It is found in the cytoplasm. The protein resides in the cytoskeleton. Its subcellular location is the spindle. In terms of biological role, required for distribution of pericentromeric heterochromatin in interphase nuclei and for centromere formation and organization, chromosome alignment and cytokinesis. The protein is Centromere protein V (CENPV) of Homo sapiens (Human).